The following is a 73-amino-acid chain: Disintegrin mojastin-2 (73 aa).

One can recognise a Disintegrin domain in the interval 1–73 (EAGEECDCGS…ADCPRNGLYG (73 aa)). 6 disulfide bridges follow: cysteine 6-cysteine 21, cysteine 8-cysteine 16, cysteine 15-cysteine 38, cysteine 29-cysteine 35, cysteine 34-cysteine 59, and cysteine 47-cysteine 66. The short motif at 51-53 (RGD) is the Cell attachment site element.

The protein belongs to the venom metalloproteinase (M12B) family. P-II subfamily. P-IIa sub-subfamily. As to quaternary structure, monomer (disintegrin). Expressed by the venom gland.

It localises to the secreted. In terms of biological role, inhibits the three processes involved in platelet function (adhesion, activation and aggregation). It inhibits platelet adhesion to fibronectin with an IC(50) of 58.6 nM. It inhibits ATP release from platelet induced by ADP with an IC(50) of 19.5 nM on platelet-rich plasma, probably by binding to ADP receptors (P2RY1 and P2RY12). Finally, it inhibits ADP-induced platelet aggregation with IC(50) of 44.7 nM on platelet-rich plasma and 19.3 nM on whole blood, probably by binding to alpha-IIb/beta-3 (ITGA2B/ITGB3). Its function is as follows. Inhibits ADP-induced platelet aggregation (IC(50) = 13.8 nM) probably by binding to alpha-IIb/beta-3 (ITGA2B/ITGB3) located on the platelet surface. This is Disintegrin mojastin-2 from Crotalus scutulatus scutulatus (Mojave rattlesnake).